The chain runs to 389 residues: Large envelope protein (389 aa).

Methionine 1 bears the N-acetylmethionine mark. Glycine 2 is lipidated: N-myristoyl glycine; by host. The tract at residues 2-108 is pre-S1; it reads GQNLSTSNPL…PPLRTTHPQA (107 aa). A pre-S region spans residues 2-163; sequence GQNLSTSNPL…FSRIGDPALN (162 aa). Topologically, residues 2–170 are virion surface; in external conformation; that stretch reads GQNLSTSNPL…ALNMENITSG (169 aa). The Intravirion; in internal conformation segment spans residues 2 to 242; that stretch reads GQNLSTSNPL…PGYRWMCLRR (241 aa). Positions 76 to 102 are disordered; that stretch reads TLPANPPPASTNRQSGRQPTPLSPPLR. Polar residues predominate over residues 85–95; the sequence is STNRQSGRQPT. A pre-S2 region spans residues 109-163; the sequence is MHWNSTTFHQTLQDPRVRGLYFPAGGSSSGTVNPVPTTTSPISSIFSRIGDPALN. The chain crosses the membrane as a helical span at residues 171–191; it reads FLGPLLVLQAGFFLLTRILTI. Topologically, residues 192–242 are intravirion; in external conformation; sequence PQSLDSWWTSLNFLGGTTVCLGQNSQSPISNHSPTSCPPTCPGYRWMCLRR. The chain crosses the membrane as a helical span at residues 243-263; it reads FIIFLFILLLCLIFLLVLLDY. The Virion surface portion of the chain corresponds to 264–337; that stretch reads QGMLPVCPLI…WASARFSWLS (74 aa). Asparagine 309 carries an N-linked (GlcNAc...) asparagine; by host glycan. The helical transmembrane segment at 338-358 threads the bilayer; the sequence is LLVPFVQWFVGLSPIVWLSVI. Topologically, residues 359–364 are intravirion; that stretch reads WMMWYW. Residues 365–387 traverse the membrane as a helical segment; it reads GPSLYSILSPFLPLLPIFFCLWA. The Virion surface portion of the chain corresponds to 388 to 389; that stretch reads YI.

The protein belongs to the orthohepadnavirus major surface antigen family. In terms of assembly, in its internal form (Li-HBsAg), interacts with the capsid protein and with the isoform S. Interacts with host chaperone CANX. As to quaternary structure, associates with host chaperone CANX through its pre-S2 N glycan; this association may be essential for isoform M proper secretion. Interacts with isoform L. Interacts with the antigens of satellite virus HDV (HDVAgs); this interaction is required for encapsidation of HDV genomic RNA. Post-translationally, isoform M is N-terminally acetylated by host at a ratio of 90%, and N-glycosylated by host at the pre-S2 region. In terms of processing, myristoylated.

It localises to the virion membrane. In terms of biological role, the large envelope protein exists in two topological conformations, one which is termed 'external' or Le-HBsAg and the other 'internal' or Li-HBsAg. In its external conformation the protein attaches the virus to cell receptors and thereby initiating infection. This interaction determines the species specificity and liver tropism. This attachment induces virion internalization predominantly through caveolin-mediated endocytosis. The large envelope protein also assures fusion between virion membrane and endosomal membrane. In its internal conformation the protein plays a role in virion morphogenesis and mediates the contact with the nucleocapsid like a matrix protein. Functionally, the middle envelope protein plays an important role in the budding of the virion. It is involved in the induction of budding in a nucleocapsid independent way. In this process the majority of envelope proteins bud to form subviral lipoprotein particles of 22 nm of diameter that do not contain a nucleocapsid. The chain is Large envelope protein from Hepatitis B virus genotype D subtype adw (isolate United Kingdom/adyw/1979) (HBV-D).